The primary structure comprises 157 residues: Endoribonuclease YbeY (157 aa).

Residues histidine 116, histidine 120, and histidine 126 each contribute to the Zn(2+) site.

Belongs to the endoribonuclease YbeY family. The cofactor is Zn(2+).

Its subcellular location is the cytoplasm. Single strand-specific metallo-endoribonuclease involved in late-stage 70S ribosome quality control and in maturation of the 3' terminus of the 16S rRNA. This Pseudarthrobacter chlorophenolicus (strain ATCC 700700 / DSM 12829 / CIP 107037 / JCM 12360 / KCTC 9906 / NCIMB 13794 / A6) (Arthrobacter chlorophenolicus) protein is Endoribonuclease YbeY.